The chain runs to 551 residues: Prunin 1 Pru du 6 (551 aa).

A signal peptide spans 1 to 20; that stretch reads MAKAFVFSLCLLLVFNGCLA. Intrachain disulfides connect C32-C65 and C108-C374. A Cupin type-1 1 domain is found at 37 to 312; the sequence is LQAREPDNRI…ALNVNEETAR (276 aa). 3 disordered regions span residues 111–194, 238–293, and 329–360; these read TFEE…QKTR, NPRK…NVFS, and GNLD…RQQQ. Composition is skewed to low complexity over residues 114 to 124, 132 to 148, and 168 to 185; these read ESQQSSQQGRQ, QQQQ…QQEQ, and QEQQ…QQFR. R194 serves as a coordination point for Ca(2+). Over residues 254-275 the composition is skewed to low complexity; that stretch reads QQGQSQPRQQGEQGRPGQHQQP. The span at 282 to 293 shows a compositional bias: polar residues; the sequence is QEQQGNGNNVFS. Over residues 339-350 the composition is skewed to basic and acidic residues; it reads GRQEREHEERQQ. Low complexity predominate over residues 351-360; it reads EQLQQERQQQ. An NGXEET; peptidase recognition motif motif is present at residues 367–372; it reads NGLEET. The region spanning 380–529 is the Cupin type-1 2 domain; that stretch reads ENIGNPERAD…AYQISREQAR (150 aa).

The protein belongs to the 11S seed storage protein (globulins) family. Hexamer of two trimers; each subunit is composed of an acidic and a basic chain derived from a single precursor and linked by a disulfide bond. Post-translationally, proteolytically processed from a single precursor to produce an acidic and a basic chain that are linked by a disulfide bond. In terms of tissue distribution, expressed in seed (at protein level). Expressed in seed.

Seed storage protein. The sequence is that of Prunin 1 Pru du 6 from Prunus dulcis (Almond).